The primary structure comprises 96 residues: Co-chaperonin GroES (96 aa).

Belongs to the GroES chaperonin family. In terms of assembly, heptamer of 7 subunits arranged in a ring. Interacts with the chaperonin GroEL.

The protein localises to the cytoplasm. Its function is as follows. Together with the chaperonin GroEL, plays an essential role in assisting protein folding. The GroEL-GroES system forms a nano-cage that allows encapsulation of the non-native substrate proteins and provides a physical environment optimized to promote and accelerate protein folding. GroES binds to the apical surface of the GroEL ring, thereby capping the opening of the GroEL channel. This is Co-chaperonin GroES from Polynucleobacter asymbioticus (strain DSM 18221 / CIP 109841 / QLW-P1DMWA-1) (Polynucleobacter necessarius subsp. asymbioticus).